A 347-amino-acid chain; its full sequence is MSENSIRLTQYSHGAGCGCKISPKVLETILHSEQAKFVDPNLLVGNETRDDAAVYDLGNGTSVISTTDFFMPIVDNPFDFGRIAATNAISDIFAMGGKPIMAIAILGWPINKLSPEIAREVTEGGRYACRQAGIALAGGHSIDAPEPIFGLAVTGIVPTERVKKNSTAQAGCKLFLTKPLGIGVLTTAEKKSLLKPEHQGLATEVMCRMNIAGASFANIEGVKAMTDVTGFGLLGHLSEMCQGAGVQARVDYDAIPKLPGVEEYIKLGAVPGGTERNFASYGHLMGEMPREVRDLLCDPQTSGGLLLAVMPEAENEVKATAAEFGIELTAIGELVPARGGRAMVEIR.

C17 is an active-site residue. Residues K20 and 48–50 contribute to the ATP site; that span reads TRD. D51 lines the Mg(2+) pocket. ATP-binding positions include D68, D91, and 139–141; that span reads GHS. D91 lines the Mg(2+) pocket. D227 is a binding site for Mg(2+).

This sequence belongs to the selenophosphate synthase 1 family. Class I subfamily. In terms of assembly, homodimer. The cofactor is Mg(2+).

It catalyses the reaction hydrogenselenide + ATP + H2O = selenophosphate + AMP + phosphate + 2 H(+). Functionally, synthesizes selenophosphate from selenide and ATP. The chain is Selenide, water dikinase from Escherichia coli O157:H7.